The sequence spans 476 residues: tRNA(Ile)-lysidine synthase (476 aa).

30–35 (SGGPDS) provides a ligand contact to ATP.

It belongs to the tRNA(Ile)-lysidine synthase family.

It is found in the cytoplasm. It catalyses the reaction cytidine(34) in tRNA(Ile2) + L-lysine + ATP = lysidine(34) in tRNA(Ile2) + AMP + diphosphate + H(+). Ligates lysine onto the cytidine present at position 34 of the AUA codon-specific tRNA(Ile) that contains the anticodon CAU, in an ATP-dependent manner. Cytidine is converted to lysidine, thus changing the amino acid specificity of the tRNA from methionine to isoleucine. This is tRNA(Ile)-lysidine synthase from Bacillus cereus (strain ATCC 10987 / NRS 248).